Consider the following 466-residue polypeptide: MLYEGYLKYMKAKYGERSQGTYFMAGEDLISKLPDSLITQILLYLPIKDIVRTSSLSSRWKSLWLLIPRLDLDSEEFQDYNAFVGFMNKFIDFSGEEKICLDKLKLSSRKTVNDLPCVTRWIDFVVRRKLKHLDVECLVNRKFLEEMPLSLYVCDTLVNLRLHRVLLGKFEAVSLPCLKTMRLEENVYANDVVLESLISSCPVLKDLIILRMFEDNVKVLRVHSLTLTSLNIDFNFGEGDDFVDGFDKKVSGVLIDAPRLKYLKFQDDLSGSKIITNSGSLAKVNVVYVFNENDCADVVDIPRRNMVRNFLTSISGVSDMKISQHFVEFLYYYKDFDPLPQFCNLSRLKAEISLYFLEILPTILESCPNLKSLVMVLEFYLQEEDEPIIFSSVPRCLVSSLESVEIKKFNGRPAKMEVARYFLENSGVLQKLVLHLRCSTHEDGFYILKDLLALPRGSSTCRIVVC.

Residues 27–80 enclose the F-box domain; that stretch reads EDLISKLPDSLITQILLYLPIKDIVRTSSLSSRWKSLWLLIPRLDLDSEEFQDY. Positions 385–436 constitute an FBD domain; sequence DEPIIFSSVPRCLVSSLESVEIKKFNGRPAKMEVARYFLENSGVLQKLVLHL.

The sequence is that of FBD-associated F-box protein At5g22730 from Arabidopsis thaliana (Mouse-ear cress).